A 133-amino-acid chain; its full sequence is Small ribosomal subunit protein uS11 (133 aa).

It belongs to the universal ribosomal protein uS11 family. In terms of assembly, part of the 30S ribosomal subunit. Interacts with proteins S7 and S18. Binds to IF-3.

Located on the platform of the 30S subunit, it bridges several disparate RNA helices of the 16S rRNA. Forms part of the Shine-Dalgarno cleft in the 70S ribosome. This chain is Small ribosomal subunit protein uS11, found in Chlamydia pneumoniae (Chlamydophila pneumoniae).